A 1024-amino-acid chain; its full sequence is Probable serine/threonine-protein kinase DDB_G0271682 (1024 aa).

The segment at 187 to 261 (NIDNNNNNNN…RDNENNHNHQ (75 aa)) is disordered. Residues 190-244 (NNNNNNNNNNNNNNNNNNNNNNNNNNNNNNNNNNNNNNNNNNNNNNNNNNNNNNN) show a composition bias toward low complexity. Over residues 250–261 (RSRDNENNHNHQ) the composition is skewed to basic and acidic residues. 2 Protein kinase domains span residues 360-609 (LLFI…LKLM) and 645-1018 (ILVT…ELLI). Residues 366 to 374 (IGSGACGEV) and K387 each bind ATP. Catalysis depends on D484, which acts as the Proton acceptor. ATP contacts are provided by residues 651-659 (VGGNVSGNV) and K719. Composition is skewed to low complexity over residues 823-851 (NNNS…NNNN) and 862-874 (ENTN…TTTT). The disordered stretch occupies residues 823-874 (NNNSNQNNNNNNNNNNNNNNNNNNNNNNNKKNDGGDDNGENTNTTTTTTTTT).

It belongs to the protein kinase superfamily. TKL Ser/Thr protein kinase family.

It catalyses the reaction L-seryl-[protein] + ATP = O-phospho-L-seryl-[protein] + ADP + H(+). The enzyme catalyses L-threonyl-[protein] + ATP = O-phospho-L-threonyl-[protein] + ADP + H(+). The chain is Probable serine/threonine-protein kinase DDB_G0271682 from Dictyostelium discoideum (Social amoeba).